Reading from the N-terminus, the 243-residue chain is Homeobox protein nob-1 (243 aa).

The segment covering 1–12 has biased composition (polar residues); the sequence is MISVMQQMINND. Disordered stretches follow at residues 1 to 23 and 40 to 67; these read MISVMQQMINNDSPEDSKESITS and SIQGESRSERESETGSSPQLAPSSTGMV. Positions 162-221 form a DNA-binding region, homeobox; sequence GKKKRQPYKKDQISRLEYEYSVNQYLTNKRRSELSAQLMLDEKQVKVWFQNRRMKDKKLR.

It belongs to the abd-b homeobox family. As to quaternary structure, interacts with nuclear receptor nhr-25. Interacts with geminin homolog gmn-1. Interacts with homeodomain protein ceh-20.

The protein resides in the nucleus. Transcription factor, involved in posterior embryonic patterning, morphogenetic movements of the posterior hypodermis, and cell fate specification. Binds to the 5'-TAGT-3' motif in regulatory elements of genes, including Meis protein psa-3 and microRNA mir-57. Involved in a negative regulatory loop with mir-57 to specify posterior cell identities. Required for asymmetric division of the T hypodermal cell, acting via the regulation of asymmetric expression of psa-3 in cooperation with ceh-20 and the Wnt-MAPK pathway. Involved in the regulation of the onset of non-apoptotic cell death in the linker cell, acting together with the Wnt signaling pathway. Involved in promoting embryogenesis, in concert with orphan nuclear receptor nhr-25. May regulate expression of transcription factor dmd-3. The polypeptide is Homeobox protein nob-1 (Caenorhabditis elegans).